The following is an 82-amino-acid chain: RNA-binding protein KhpA (82 aa).

The KH domain maps to 35 to 82 (STILELRVSQSDVGKIIGRRGRIARAIRTLLGACAAKTNRRVQLEILD).

The protein belongs to the KhpA RNA-binding protein family. As to quaternary structure, forms a complex with KhpB.

The protein localises to the cytoplasm. Its function is as follows. A probable RNA chaperone. Forms a complex with KhpB which binds to cellular RNA and controls its expression. Plays a role in peptidoglycan (PG) homeostasis and cell length regulation. The sequence is that of RNA-binding protein KhpA from Borreliella burgdorferi (strain ATCC 35210 / DSM 4680 / CIP 102532 / B31) (Borrelia burgdorferi).